We begin with the raw amino-acid sequence, 435 residues long: Transmembrane protease serine 4 (435 aa).

Residues 1 to 30 (MESDSGQPLNNRDIVPFRKPRRPQETFKKV) are Cytoplasmic-facing. A helical; Signal-anchor for type II membrane protein membrane pass occupies residues 31–51 (GIPIIAVLLSLIALVIVALLI). Over 52-435 (KVILDKYYFI…WIYNVRKSEM (384 aa)) the chain is Extracellular. Residues 59–101 (YFICGSPLTFIQRGQLCDGHLDCASGEDEEHCVKDFPEKPGVA) enclose the LDL-receptor class A domain. 8 disulfide bridges follow: cysteine 62-cysteine 81, cysteine 75-cysteine 90, cysteine 125-cysteine 181, cysteine 138-cysteine 191, cysteine 194-cysteine 308, cysteine 228-cysteine 244, cysteine 354-cysteine 370, and cysteine 381-cysteine 408. The SRCR domain maps to 102–202 (VRLSKDRSTL…DCGKSLKTPR (101 aa)). 2 N-linked (GlcNAc...) asparagine glycosylation sites follow: asparagine 128 and asparagine 176. The Peptidase S1 domain maps to 203 to 432 (VVGGVEAPVD…YLNWIYNVRK (230 aa)). Residues histidine 243 and aspartate 288 each act as charge relay system in the active site. The active-site Charge relay system is the serine 385.

Belongs to the peptidase S1 family. In terms of processing, proteolytically processed; probably by an autocatalytic mechanism.

The protein resides in the cell membrane. The protein localises to the secreted. Plasma membrane-anchored serine protease that directly induces processing of pro-uPA/PLAU into the active form through proteolytic activity. Seems to be capable of activating ENaC. In Mus musculus (Mouse), this protein is Transmembrane protease serine 4.